The sequence spans 305 residues: E3 ubiquitin-protein ligase RNF115 (305 aa).

Position 2 is an N-acetylalanine (alanine 2). The segment covering 100 to 110 (NRANERGHQTH) has biased composition (basic and acidic residues). Residues 100-139 (NRANERGHQTHTDFWGPSRPPRLPMTRRYRSRGSTRPDRS) are disordered. Serine 133 is subject to Phosphoserine. Residues 229–270 (CPVCKEDYTVEEKVRQLPCNHFFHSSCIVPWLELHDTCPVCR) form an RING-type zinc finger. Residues 274–305 (NGEDSTRQTQSSEASASNRFSNDSQLHDRWTF) are disordered. Polar residues predominate over residues 280–297 (RQTQSSEASASNRFSNDS).

Interacts with RAB7A. Interacts with EGFR and FLT3. Interacts with BST2. Interacts with STX17. Interacts with YWHAE. In terms of processing, phosphorylated by AKT1, allowing association with the 14-3-3 chaperones that facilitates associating with TLRs. Post-translationally, deubiquitinated by USP9X; antogonizing its autoubiquitination and subsequent proteasomal degradation. RING-type zinc finger-dependent and E2-dependent autoubiquitination.

The protein localises to the cytoplasm. It is found in the cytoplasmic vesicle. It localises to the phagosome. Its subcellular location is the nucleus. The protein resides in the endoplasmic reticulum. The protein localises to the golgi apparatus. It catalyses the reaction S-ubiquitinyl-[E2 ubiquitin-conjugating enzyme]-L-cysteine + [acceptor protein]-L-lysine = [E2 ubiquitin-conjugating enzyme]-L-cysteine + N(6)-ubiquitinyl-[acceptor protein]-L-lysine.. It participates in protein modification; protein ubiquitination. Its function is as follows. E3 ubiquitin-protein ligase that catalyzes the 'Lys-48'- and/or 'Lys-63'-linked polyubiquitination of various substrates and thereby plays a role in a number of signaling pathways including autophagy, innate immunity, cell proliferation and cell death. Plays a role in the endosomal trafficking and degradation of membrane receptors including EGFR, FLT3, MET and CXCR4 through their polyubiquitination. Participates together with BST2 in antiviral immunity by facilitating the internalization of HIV-1 virions into intracellular vesicles leading to their lysosomal degradation. Also possesses an antiviral activity independently of BST2 by promoting retroviral GAG proteins ubiquitination, redistribution to endo-lysosomal compartments and, ultimately, lysosomal degradation. Catalyzes distinct types of ubiquitination on MAVS and STING1 at different phases of viral infection to promote innate antiviral response. Mediates the 'Lys-48'-linked ubiquitination of MAVS leading to its proteasomal degradation and ubiquitinates STING1 via 'Lys-63'-linked polyubiquitination, critical for its oligomerization and the subsequent recruitment of TBK1. Plays a positive role in the autophagosome-lysosome fusion by interacting with STX17 and enhancing its stability without affecting 'Lys-48'- or 'Lys-63'-linked polyubiquitination levels, which in turn promotes autophagosome maturation. Negatively regulates TLR-induced expression of proinflammatory cytokines by catalyzing 'Lys-11'-linked ubiquitination of RAB1A and RAB13 to inhibit post-ER trafficking of TLRs to the Golgi by RAB1A and subsequently from the Golgi apparatus to the cell surface by RAB13. The sequence is that of E3 ubiquitin-protein ligase RNF115 from Mus musculus (Mouse).